We begin with the raw amino-acid sequence, 237 residues long: Ribonuclease PH (237 aa).

Phosphate contacts are provided by residues arginine 86 and 124-126 (GTR).

Belongs to the RNase PH family. As to quaternary structure, homohexameric ring arranged as a trimer of dimers.

The catalysed reaction is tRNA(n+1) + phosphate = tRNA(n) + a ribonucleoside 5'-diphosphate. Functionally, phosphorolytic 3'-5' exoribonuclease that plays an important role in tRNA 3'-end maturation. Removes nucleotide residues following the 3'-CCA terminus of tRNAs; can also add nucleotides to the ends of RNA molecules by using nucleoside diphosphates as substrates, but this may not be physiologically important. Probably plays a role in initiation of 16S rRNA degradation (leading to ribosome degradation) during starvation. The polypeptide is Ribonuclease PH (Beijerinckia indica subsp. indica (strain ATCC 9039 / DSM 1715 / NCIMB 8712)).